The following is a 407-amino-acid chain: Lysosome-associated membrane glycoprotein 1 (407 aa).

Residues methionine 1–glycine 21 form the signal peptide. Positions alanine 22–aspartate 189 are first lumenal domain. Topologically, residues alanine 22–asparagine 371 are lumenal. Asparagine 32, asparagine 40, asparagine 57, asparagine 72, asparagine 79, asparagine 98, asparagine 102, asparagine 116, asparagine 125, asparagine 145, asparagine 160, and asparagine 178 each carry an N-linked (GlcNAc...) asparagine glycan. Cysteine 36 and cysteine 75 are oxidised to a cystine. Cysteine 150 and cysteine 186 are joined by a disulfide. The tract at residues glutamate 183 to proline 206 is disordered. Positions glycine 190–glutamate 219 are hinge. The span at threonine 194–proline 206 shows a compositional bias: pro residues. N-linked (GlcNAc...) asparagine glycans are attached at residues asparagine 215, asparagine 220, asparagine 233, asparagine 241, asparagine 253, asparagine 283, asparagine 297, asparagine 304, and asparagine 312. Residues asparagine 220–asparagine 371 are second lumenal domain. Cysteine 223 and cysteine 260 are disulfide-bonded. Cysteine 328 and cysteine 365 form a disulfide bridge. Residues methionine 372–isoleucine 395 traverse the membrane as a helical segment. Topologically, residues glycine 396–isoleucine 407 are cytoplasmic.

Belongs to the LAMP family. Interacts with ABCB9; this interaction strongly stabilizes ABCB9 and protects ABCB9 against lysosomal degradation. Interacts with FURIN. Interacts with TMEM175; inhibiting the proton channel activity of TMEM175. Post-translationally, O- and N-glycosylated; some of the N-glycans attached to LAMP-1 are polylactosaminoglycans.

It localises to the lysosome membrane. The protein resides in the endosome membrane. It is found in the late endosome membrane. Its subcellular location is the cell membrane. The protein localises to the cytolytic granule membrane. Its function is as follows. Lysosomal membrane glycoprotein which plays an important role in lysosome biogenesis, lysosomal pH regulation, autophagy and cholesterol homeostasis. Acts as an important regulator of lysosomal lumen pH regulation by acting as a direct inhibitor of the proton channel TMEM175, facilitating lysosomal acidification for optimal hydrolase activity. Also plays an important role in NK-cells cytotoxicity. Mechanistically, participates in cytotoxic granule movement to the cell surface and perforin trafficking to the lytic granule. In addition, protects NK-cells from degranulation-associated damage induced by their own cytotoxic granule content. Presents carbohydrate ligands to selectins. The protein is Lysosome-associated membrane glycoprotein 1 (LAMP1) of Cricetulus griseus (Chinese hamster).